A 3032-amino-acid polypeptide reads, in one-letter code: DmX-like protein 2 (3032 aa).

WD repeat units follow at residues 108–145 (FLSS…ILEE), 167–207 (KTSV…KSSI), and 230–278 (AHPR…EDCL). Phosphoserine is present on serine 326. A disordered region spans residues 418–486 (QLDHESDDAD…HPRPSISMPL (69 aa)). A compositionally biased stretch (acidic residues) spans 422–434 (ESDDADREDEERS). Over residues 435–474 (QDERERGLRMKLDHELSLDRESEAGTGSSEHEDGEREGSP) the composition is skewed to basic and acidic residues. Serine 473 is modified (phosphoserine). One copy of the WD 4 repeat lies at 492–532 (DRKIETLLTEWNKNPDMLFTIHPVDGTFLVWHVKYLDEYNP). The disordered stretch occupies residues 577–598 (PSQQEMMSVDSPHGSQLHSPSH). Serine 587 carries the phosphoserine modification. The segment covering 589 to 598 (HGSQLHSPSH) has biased composition (polar residues). WD repeat units follow at residues 594–633 (HSPS…KSAF), 750–802 (LHTS…RKLL), and 879–921 (QPSQ…VQAC). Residues 937–958 (VPGQKNLDSSPETSSSMSSVPH) form a disordered region. Serine 945 and serine 946 each carry phosphoserine. Residues 945-958 (SSPETSSSMSSVPH) are compositionally biased toward low complexity. Residues 1001–1038 (LSSSSIYPVCLAPYLVVTTCSDNKVRFWKCCMETNSLG) form a WD 8 repeat. 3 positions are modified to phosphoserine: serine 1141, serine 1144, and serine 1152. WD repeat units lie at residues 1164-1205 (PNIK…VSDQ) and 1245-1285 (GTPS…GNVD). 2 positions are modified to phosphoserine: serine 1288 and serine 1399. Threonine 1416 carries the post-translational modification Phosphothreonine. The tract at residues 1443–1464 (RISEDSTKKPQSYEDHIESQSE) is disordered. Residues 1444–1461 (ISEDSTKKPQSYEDHIES) show a composition bias toward basic and acidic residues. The residue at position 1856 (serine 1856) is a Phosphoserine. Residues 1922-1953 (QLDSVSGRMENGPSESKPVSRSDGGSGADWSA) are disordered. Threonine 2017 is modified (phosphothreonine). The stretch at 2117–2146 (GSYERHQIERRRLQAKREHAERRKLWLQKN) forms a coiled coil. Serine 2394 and serine 2636 each carry phosphoserine. Low complexity predominate over residues 2722–2732 (QPGAASHSSSQ). A disordered region spans residues 2722 to 2744 (QPGAASHSSSQPHPPPSLPWLGS). WD repeat units lie at residues 2757 to 2796 (RNLH…QLVC), 2800 to 2839 (AGNA…SNPK), 2846 to 2888 (CHSK…GNSL), 2894 to 2933 (CHDH…LIHT), 2936 to 2975 (AHDS…LIHS), and 2988 to 3026 (NIGA…NIPN).

In terms of assembly, interacts with MADD and RAB3GAP. As to expression, expressed in the brain and pituitary gland. Detected in the hippocampus, dentate gyrus, hypothalamus, pyriform cortex and the granular and molecular layers of the cerebellum of adult animals. In the hypothalamus, expression is observed in the arcuate nucleus, the ME, the organum vasculosum of the lamina terminalis, and the subfornical organ, the subcommissural organ, and the suprachiasmatic nucleus. Both tanycytes and hypothalamic neurosecretory neurons express the protein. Expressed in the inner and outer hair cells as well as in the spiral ganglion neurons. Expressed in insulin-secreting cells of the islets of Langerhans in the pancreas.

Its subcellular location is the cytoplasmic vesicle. It is found in the secretory vesicle. It localises to the synaptic vesicle membrane. The protein resides in the neuronal dense core vesicle. In terms of biological role, may serve as a scaffold protein for MADD and RAB3GA on synaptic vesicles of neuronal and endocrine homeostatic processes. Plays a role in the brain as a key controller of neuronal and endocrine homeostatic processes. This Mus musculus (Mouse) protein is DmX-like protein 2 (Dmxl2).